The sequence spans 345 residues: Myb/SANT-like DNA-binding domain-containing protein 4 (345 aa).

Positions 4-77 constitute a Myb-like domain; that stretch reads LKRKRKSNFS…EVKRRYLDWR (74 aa). K9 is covalently cross-linked (Glycyl lysine isopeptide (Lys-Gly) (interchain with G-Cter in SUMO2)). S106 bears the Phosphoserine mark. Residues K114 and K142 each participate in a glycyl lysine isopeptide (Lys-Gly) (interchain with G-Cter in SUMO2) cross-link. The interval 139 to 175 is disordered; it reads TEVKVEEEERDPQSPEFEIEEEEEMLSSVIPDSRREN. Position 188 is a phosphothreonine (T188). Positions 202–344 form a coiled coil; the sequence is HLLMNIEKQK…RLRIQKEGHL (143 aa). Glycyl lysine isopeptide (Lys-Gly) (interchain with G-Cter in SUMO2) cross-links involve residues K237, K254, and K273.

The sequence is that of Myb/SANT-like DNA-binding domain-containing protein 4 (Msantd4) from Mus musculus (Mouse).